The sequence spans 1517 residues: DNA-directed RNA polymerase subunit beta' (1517 aa).

4 residues coordinate Zn(2+): Cys-71, Cys-73, Cys-86, and Cys-89. Asp-482, Asp-484, and Asp-486 together coordinate Mg(2+). Zn(2+) contacts are provided by Cys-812, Cys-886, Cys-893, and Cys-896.

Belongs to the RNA polymerase beta' chain family. As to quaternary structure, the RNAP catalytic core consists of 2 alpha, 1 beta, 1 beta' and 1 omega subunit. When a sigma factor is associated with the core the holoenzyme is formed, which can initiate transcription. Requires Mg(2+) as cofactor. It depends on Zn(2+) as a cofactor.

It carries out the reaction RNA(n) + a ribonucleoside 5'-triphosphate = RNA(n+1) + diphosphate. DNA-dependent RNA polymerase catalyzes the transcription of DNA into RNA using the four ribonucleoside triphosphates as substrates. This chain is DNA-directed RNA polymerase subunit beta', found in Campylobacter lari (strain RM2100 / D67 / ATCC BAA-1060).